Reading from the N-terminus, the 246-residue chain is uncharacterized protein (246 aa).

This is an uncharacterized protein from Methanocaldococcus jannaschii (strain ATCC 43067 / DSM 2661 / JAL-1 / JCM 10045 / NBRC 100440) (Methanococcus jannaschii).